The following is a 62-amino-acid chain: Large ribosomal subunit protein bL33 (62 aa).

The protein belongs to the bacterial ribosomal protein bL33 family.

The protein is Large ribosomal subunit protein bL33 of Porphyromonas gingivalis (strain ATCC 33277 / DSM 20709 / CIP 103683 / JCM 12257 / NCTC 11834 / 2561).